A 142-amino-acid chain; its full sequence is Hemoglobin subunit alpha (142 aa).

A Globin domain is found at 2–142 (VLSPADKSNV…VSTVLTSKYR (141 aa)). A Phosphoserine modification is found at S4. Residues K8 and K12 each carry the N6-succinyllysine modification. At K17 the chain carries N6-acetyllysine; alternate. K17 carries the post-translational modification N6-succinyllysine; alternate. Y25 is subject to Phosphotyrosine. At S36 the chain carries Phosphoserine. An N6-succinyllysine modification is found at K41. S50 is modified (phosphoserine). O2 is bound at residue H59. Residue H88 participates in heme b binding. At S103 the chain carries Phosphoserine. T109 carries the phosphothreonine modification. Phosphoserine is present on residues S125 and S132. 2 positions are modified to phosphothreonine: T135 and T138. S139 carries the phosphoserine modification.

It belongs to the globin family. As to quaternary structure, heterotetramer of two alpha chains and two beta chains. As to expression, red blood cells.

In terms of biological role, involved in oxygen transport from the lung to the various peripheral tissues. Its function is as follows. Hemopressin acts as an antagonist peptide of the cannabinoid receptor CNR1. Hemopressin-binding efficiently blocks cannabinoid receptor CNR1 and subsequent signaling. This is Hemoglobin subunit alpha (HBA) from Chlorocebus aethiops (Green monkey).